A 77-amino-acid chain; its full sequence is RNA-binding protein Hfq (77 aa).

Positions 10–70 (DIFLNSARKN…ITTVTPEKPI (61 aa)) constitute a Sm domain.

This sequence belongs to the Hfq family. Homohexamer.

In terms of biological role, RNA chaperone that binds small regulatory RNA (sRNAs) and mRNAs to facilitate mRNA translational regulation in response to envelope stress, environmental stress and changes in metabolite concentrations. Also binds with high specificity to tRNAs. In Clostridium botulinum (strain Eklund 17B / Type B), this protein is RNA-binding protein Hfq.